Reading from the N-terminus, the 240-residue chain is 6-phosphogluconolactonase (240 aa).

This sequence belongs to the glucosamine/galactosamine-6-phosphate isomerase family. 6-phosphogluconolactonase subfamily.

It catalyses the reaction 6-phospho-D-glucono-1,5-lactone + H2O = 6-phospho-D-gluconate + H(+). Its pathway is carbohydrate degradation; pentose phosphate pathway; D-ribulose 5-phosphate from D-glucose 6-phosphate (oxidative stage): step 2/3. Hydrolysis of 6-phosphogluconolactone to 6-phosphogluconate. The polypeptide is 6-phosphogluconolactonase (pgl) (Nostoc sp. (strain PCC 7120 / SAG 25.82 / UTEX 2576)).